We begin with the raw amino-acid sequence, 118 residues long: Basic phospholipase A2 PA-9C (118 aa).

Cystine bridges form between Cys11/Cys71, Cys27/Cys117, Cys29/Cys45, Cys44/Cys98, Cys51/Cys91, Cys60/Cys84, and Cys78/Cys89. Ca(2+) is bound by residues Tyr28, Gly30, and Gly32. The active site involves His48. Residue Asp49 coordinates Ca(2+). Asp92 is a catalytic residue.

It belongs to the phospholipase A2 family. Group I subfamily. D49 sub-subfamily. Ca(2+) serves as cofactor. Expressed by the venom gland.

The protein resides in the secreted. It catalyses the reaction a 1,2-diacyl-sn-glycero-3-phosphocholine + H2O = a 1-acyl-sn-glycero-3-phosphocholine + a fatty acid + H(+). Its function is as follows. PLA2 catalyzes the calcium-dependent hydrolysis of the 2-acyl groups in 3-sn-phosphoglycerides. This chain is Basic phospholipase A2 PA-9C, found in Pseudechis australis (Mulga snake).